The sequence spans 142 residues: Ribosome maturation factor RimP (142 aa).

The protein belongs to the RimP family.

The protein localises to the cytoplasm. In terms of biological role, required for maturation of 30S ribosomal subunits. The sequence is that of Ribosome maturation factor RimP from Nitratiruptor sp. (strain SB155-2).